The following is a 277-amino-acid chain: NAD kinase (277 aa).

The active-site Proton acceptor is the Asp-67. NAD(+) is bound by residues 67–68 (DG), Arg-72, 137–138 (NE), Lys-148, Arg-165, Asp-167, 178–183 (TGYAMS), Leu-202, and Gln-236.

Belongs to the NAD kinase family. A divalent metal cation is required as a cofactor.

It is found in the cytoplasm. The enzyme catalyses NAD(+) + ATP = ADP + NADP(+) + H(+). Functionally, involved in the regulation of the intracellular balance of NAD and NADP, and is a key enzyme in the biosynthesis of NADP. Catalyzes specifically the phosphorylation on 2'-hydroxyl of the adenosine moiety of NAD to yield NADP. In Pyrococcus furiosus (strain ATCC 43587 / DSM 3638 / JCM 8422 / Vc1), this protein is NAD kinase.